We begin with the raw amino-acid sequence, 47 residues long: Large ribosomal subunit protein bL36A (47 aa).

Belongs to the bacterial ribosomal protein bL36 family.

The polypeptide is Large ribosomal subunit protein bL36A (Yersinia enterocolitica serotype O:8 / biotype 1B (strain NCTC 13174 / 8081)).